Here is a 385-residue protein sequence, read N- to C-terminus: Glutamate 5-kinase (385 aa).

K18 is a binding site for ATP. Residues S57, D144, and N156 each coordinate substrate. 218–224 serves as a coordination point for ATP; the sequence is TGGMKSK. The 79-residue stretch at 283–361 folds into the PUA domain; the sequence is RGVLSIDAGA…SRIEQVLGHK (79 aa).

This sequence belongs to the glutamate 5-kinase family.

Its subcellular location is the cytoplasm. The catalysed reaction is L-glutamate + ATP = L-glutamyl 5-phosphate + ADP. The protein operates within amino-acid biosynthesis; L-proline biosynthesis; L-glutamate 5-semialdehyde from L-glutamate: step 1/2. Functionally, catalyzes the transfer of a phosphate group to glutamate to form L-glutamate 5-phosphate. The protein is Glutamate 5-kinase of Syntrophus aciditrophicus (strain SB).